The chain runs to 154 residues: Large ribosomal subunit protein uL13 (154 aa).

The disordered stretch occupies residues 132–154 (PHEAQQPEVLDVKSMNAKNTRSA).

It belongs to the universal ribosomal protein uL13 family. As to quaternary structure, part of the 50S ribosomal subunit.

Its function is as follows. This protein is one of the early assembly proteins of the 50S ribosomal subunit, although it is not seen to bind rRNA by itself. It is important during the early stages of 50S assembly. The sequence is that of Large ribosomal subunit protein uL13 from Paracoccus denitrificans (strain Pd 1222).